The primary structure comprises 227 residues: MKFAVIVLPGSNCDIDMYHAIQDELGEQVEYVWHDETSLDGFDGVLVPGGFSYGDYLRCGAIARFSNIMPAVKKAAAEGKPVLGVCNGFQILQELGILPGAMRRNKDLKFICRPVELIVENNETQFTSGYQKGESISVPVAHGEGNFYCDEDTLAKLIENNQIAFTYGDDINGSVNRIAGITNEEGNVLGMMPHPERAVDSLLGSADGLKLFQSIVKNWRDTHVTTA.

Residues 3-225 (FAVIVLPGSN…VKNWRDTHVT (223 aa)) enclose the Glutamine amidotransferase type-1 domain. The active-site Nucleophile is C86. Active-site residues include H194 and E196.

Part of the FGAM synthase complex composed of 1 PurL, 1 PurQ and 2 PurS subunits.

The protein localises to the cytoplasm. The catalysed reaction is N(2)-formyl-N(1)-(5-phospho-beta-D-ribosyl)glycinamide + L-glutamine + ATP + H2O = 2-formamido-N(1)-(5-O-phospho-beta-D-ribosyl)acetamidine + L-glutamate + ADP + phosphate + H(+). The enzyme catalyses L-glutamine + H2O = L-glutamate + NH4(+). The protein operates within purine metabolism; IMP biosynthesis via de novo pathway; 5-amino-1-(5-phospho-D-ribosyl)imidazole from N(2)-formyl-N(1)-(5-phospho-D-ribosyl)glycinamide: step 1/2. Part of the phosphoribosylformylglycinamidine synthase complex involved in the purines biosynthetic pathway. Catalyzes the ATP-dependent conversion of formylglycinamide ribonucleotide (FGAR) and glutamine to yield formylglycinamidine ribonucleotide (FGAM) and glutamate. The FGAM synthase complex is composed of three subunits. PurQ produces an ammonia molecule by converting glutamine to glutamate. PurL transfers the ammonia molecule to FGAR to form FGAM in an ATP-dependent manner. PurS interacts with PurQ and PurL and is thought to assist in the transfer of the ammonia molecule from PurQ to PurL. In Bacillus pumilus (strain SAFR-032), this protein is Phosphoribosylformylglycinamidine synthase subunit PurQ.